A 333-amino-acid chain; its full sequence is Anthranilate phosphoribosyltransferase (333 aa).

Residues G80, 83-84 (GD), T88, 90-93 (NLST), 108-116 (KHGNRSASG), and S120 contribute to the 5-phospho-alpha-D-ribose 1-diphosphate site. Residue G80 participates in anthranilate binding. Residue S92 participates in Mg(2+) binding. Residue N111 coordinates anthranilate. Position 166 (R166) interacts with anthranilate. The Mg(2+) site is built by D224 and E225.

The protein belongs to the anthranilate phosphoribosyltransferase family. In terms of assembly, homodimer. The cofactor is Mg(2+).

It catalyses the reaction N-(5-phospho-beta-D-ribosyl)anthranilate + diphosphate = 5-phospho-alpha-D-ribose 1-diphosphate + anthranilate. It functions in the pathway amino-acid biosynthesis; L-tryptophan biosynthesis; L-tryptophan from chorismate: step 2/5. Functionally, catalyzes the transfer of the phosphoribosyl group of 5-phosphorylribose-1-pyrophosphate (PRPP) to anthranilate to yield N-(5'-phosphoribosyl)-anthranilate (PRA). This chain is Anthranilate phosphoribosyltransferase, found in Pyrobaculum arsenaticum (strain DSM 13514 / JCM 11321 / PZ6).